The chain runs to 251 residues: Ubiquinone/menaquinone biosynthesis C-methyltransferase UbiE (251 aa).

S-adenosyl-L-methionine-binding positions include Thr74, Asp95, and Asn123–Ala124.

This sequence belongs to the class I-like SAM-binding methyltransferase superfamily. MenG/UbiE family.

The enzyme catalyses a 2-demethylmenaquinol + S-adenosyl-L-methionine = a menaquinol + S-adenosyl-L-homocysteine + H(+). It catalyses the reaction a 2-methoxy-6-(all-trans-polyprenyl)benzene-1,4-diol + S-adenosyl-L-methionine = a 5-methoxy-2-methyl-3-(all-trans-polyprenyl)benzene-1,4-diol + S-adenosyl-L-homocysteine + H(+). It participates in quinol/quinone metabolism; menaquinone biosynthesis; menaquinol from 1,4-dihydroxy-2-naphthoate: step 2/2. Its pathway is cofactor biosynthesis; ubiquinone biosynthesis. Functionally, methyltransferase required for the conversion of demethylmenaquinol (DMKH2) to menaquinol (MKH2) and the conversion of 2-polyprenyl-6-methoxy-1,4-benzoquinol (DDMQH2) to 2-polyprenyl-3-methyl-6-methoxy-1,4-benzoquinol (DMQH2). This chain is Ubiquinone/menaquinone biosynthesis C-methyltransferase UbiE, found in Shewanella baltica (strain OS223).